Consider the following 489-residue polypeptide: Cobyric acid synthase (489 aa).

The region spanning 254 to 442 (ARVIAVPVLP…VHGLFADDRQ (189 aa)) is the GATase cobBQ-type domain. C336 (nucleophile) is an active-site residue. The active site involves H434.

The protein belongs to the CobB/CobQ family. CobQ subfamily.

It functions in the pathway cofactor biosynthesis; adenosylcobalamin biosynthesis. Functionally, catalyzes amidations at positions B, D, E, and G on adenosylcobyrinic A,C-diamide. NH(2) groups are provided by glutamine, and one molecule of ATP is hydrogenolyzed for each amidation. This is Cobyric acid synthase from Methylobacterium nodulans (strain LMG 21967 / CNCM I-2342 / ORS 2060).